We begin with the raw amino-acid sequence, 369 residues long: Deoxyuridine 5'-triphosphate nucleotidohydrolase (369 aa).

Substrate is bound by residues 258–260 (RSS) and 364–365 (FG).

It belongs to the dUTPase family. Requires Mg(2+) as cofactor.

It catalyses the reaction dUTP + H2O = dUMP + diphosphate + H(+). In terms of biological role, involved in nucleotide metabolism: produces dUMP, the immediate precursor of thymidine nucleotides and decreases the intracellular concentration of dUTP to avoid uracil incorporation into viral DNA. In Homo sapiens (Human), this protein is Deoxyuridine 5'-triphosphate nucleotidohydrolase.